The primary structure comprises 56 residues: Large ribosomal subunit protein eL37 (56 aa).

Positions 19, 22, 34, and 37 each coordinate Zn(2+). A C4-type zinc finger spans residues 19-37 (CRRCGRLSYNFNRKTCVAC).

Belongs to the eukaryotic ribosomal protein eL37 family. Requires Zn(2+) as cofactor.

Binds to the 23S rRNA. The chain is Large ribosomal subunit protein eL37 from Methanothrix thermoacetophila (strain DSM 6194 / JCM 14653 / NBRC 101360 / PT) (Methanosaeta thermophila).